We begin with the raw amino-acid sequence, 657 residues long: Putative GreA-associated domains protein (657 aa).

In terms of domain architecture, GRAD2 spans 1-152 (MDTRDLTAYS…EQEGNKEKAT (152 aa)). The region spanning 153–657 (EFYKKALYRF…TAGSFGTLWE (505 aa)) is the GRAD1 domain.

This chain is Putative GreA-associated domains protein, found in Treponema pallidum (strain Nichols).